Here is a 68-residue protein sequence, read N- to C-terminus: Large ribosomal subunit protein bL31 (68 aa).

Zn(2+) contacts are provided by C17, C19, C37, and C40.

The protein belongs to the bacterial ribosomal protein bL31 family. Type A subfamily. As to quaternary structure, part of the 50S ribosomal subunit. Zn(2+) is required as a cofactor.

Binds the 23S rRNA. The sequence is that of Large ribosomal subunit protein bL31 from Dehalococcoides mccartyi (strain CBDB1).